Consider the following 347-residue polypeptide: Probable magnetosome protein Mms36 (347 aa).

The helical transmembrane segment at 25-45 (VLVLYLAIAVVVAVLAWPWLA) threads the bilayer.

The protein localises to the magnetosome membrane. The 4 genes of this operon collectively influence magnetosome size and number. In Magnetospirillum gryphiswaldense (strain DSM 6361 / JCM 21280 / NBRC 15271 / MSR-1), this protein is Probable magnetosome protein Mms36.